The following is a 1034-amino-acid chain: Platelet endothelial aggregation receptor 1 (1034 aa).

Positions 1–18 (MPLCPLLLLALGLRLTGT) are cleaved as a signal peptide. Over 19–754 (LNSNDPNVCT…PTSPVTHNSL (736 aa)) the chain is Extracellular. In terms of domain architecture, EMI spans 23 to 101 (DPNVCTFWES…YYESRGACVP (79 aa)). Disulfide bonds link C27–C89, C53–C63, and C88–C99. N150 carries N-linked (GlcNAc...) asparagine glycosylation. EGF-like domains are found at residues 181-215 (YGPACQFDCQCYGASCDPQDGACFCPPGRAGPSCN), 223-258 (DGFFCPRTYPCQNGGVPQGSQGSCSCPPGWMGVICS), 266-301 (HGPNCTQECRCHNGGLCDRFTGQCHCAPGYIGDRCQ), 309-344 (FGQDCAETCDCAPGARCFPANGACLCEHGFTGDRCT), and 398-433 (HGPGCQEHCLCLHGGLCLADSGLCRCAPGYTGPHCA). Disulfide bonds link C185/C196, C189/C203, C205/C214, C233/C246, and C248/C257. N269 carries N-linked (GlcNAc...) asparagine glycosylation. Cystine bridges form between C270–C282, C276–C289, C291–C300, C313–C325, C319–C332, C334–C343, C402–C414, C408–C421, and C423–C432. N474 is a glycosylation site (N-linked (GlcNAc...) asparagine). 4 consecutive EGF-like domains span residues 484–519 (WGFNCNASCQCAHDGVCSPQTGACTCTPGWHGAHCQ), 575–605 (SNTCTCKNGGTCVSENGNCVCAPGFRGPSCQ), 613–648 (YGKRCVQCKCNNNHSSCHPSDGTCSCLAGWTGPDCS), and 656–691 (WGLKCSQLCQCHHGGTCHPQDGSCICTPGWTGPNCL). 12 disulfide bridges follow: C488-C500, C494-C507, C509-C518, C578-C586, C580-C593, C595-C604, C617-C629, C622-C636, C638-C647, C660-C672, C666-C679, and C681-C690. Residues 755–775 (GAVIGIAVLGTLVVALIALFI) traverse the membrane as a helical segment. The Cytoplasmic segment spans residues 776 to 1034 (GYRQWQKGKE…PSPPSRRQDR (259 aa)). The segment at 823–883 (TLSQCSPNPP…PHERGASHLD (61 aa)) is disordered. The span at 851–883 (RPSRAHGRENHVTLPADWKHRREPHERGASHLD) shows a compositional bias: basic and acidic residues. Residue Y923 is modified to Phosphotyrosine. The disordered stretch occupies residues 925-1034 (TIRDLPSLPG…PSPPSRRQDR (110 aa)). Phosphoserine is present on S951. Positions 972-991 (DSGTYEQPSPLSHNEESLGS) are enriched in polar residues. Phosphoserine is present on S1026.

Belongs to the MEGF family. As to quaternary structure, interacts with SHC2 upon its aggregation-induced tyrosine phosphorylation. Interacts (via extracellular domain) with SVEP1. In terms of processing, phosphorylated in the intracellular domain on tyrosine residues. Phosphorylated on tyrosine residues by SRC. Tyrosine phosphorylation is detected upon platelet aggregation stimulated by collagen, TRAP and thrombin and platelet-platelet contacts but not after platelet activation. Tyrosine phosphorylation enhanced its association with SHC1 and SHC2. Phosphorylated in the intracellular domain on tyrosine residues. Phosphorylated when in the presence of SVEP1. As to expression, expressed in thymocytes, bone marrow stromal and osteogenic cells (at protein level). Strongly expressed in kidney and heart. Moderately expressed in lung, spleen, thymus, liver, brain, testis, skin and stomach. Expressed in hematopoietic stem progenitor cells.

It localises to the cell membrane. Its subcellular location is the cell projection. It is found in the lamellipodium. Required for SVEP1-mediated platelet activation, via its interaction with SVEP1 and subsequent activation of AKT/mTOR signaling. May be involved in the early stages of hematopoiesis. The protein is Platelet endothelial aggregation receptor 1 (Pear1) of Mus musculus (Mouse).